The chain runs to 1051 residues: Putative helicase/primase complex protein (1051 aa).

This sequence belongs to the asfivirus F1055L family.

Functionally, may be involved in DNA replication. In Ornithodoros (relapsing fever ticks), this protein is Putative helicase/primase complex protein.